The sequence spans 831 residues: Translation initiation factor IF-2 (831 aa).

A tr-type G domain is found at 329–499 (TRAPVVTVMG…LLISEMQDLK (171 aa)). Residues 338-345 (GHVDHGKT) are G1. 338-345 (GHVDHGKT) lines the GTP pocket. The segment at 363 to 367 (GITQH) is G2. Residues 385-388 (DTPG) are G3. GTP is bound by residues 385–389 (DTPGH) and 439–442 (NKID). Residues 439–442 (NKID) form a G4 region. Residues 475–477 (SAL) form a G5 region.

It belongs to the TRAFAC class translation factor GTPase superfamily. Classic translation factor GTPase family. IF-2 subfamily.

It localises to the cytoplasm. Its function is as follows. One of the essential components for the initiation of protein synthesis. Protects formylmethionyl-tRNA from spontaneous hydrolysis and promotes its binding to the 30S ribosomal subunits. Also involved in the hydrolysis of GTP during the formation of the 70S ribosomal complex. This is Translation initiation factor IF-2 (infB) from Rickettsia prowazekii (strain Madrid E).